Reading from the N-terminus, the 330-residue chain is Aspartate--ammonia ligase (330 aa).

Belongs to the class-II aminoacyl-tRNA synthetase family. AsnA subfamily.

It localises to the cytoplasm. The enzyme catalyses L-aspartate + NH4(+) + ATP = L-asparagine + AMP + diphosphate + H(+). Its pathway is amino-acid biosynthesis; L-asparagine biosynthesis; L-asparagine from L-aspartate (ammonia route): step 1/1. The protein is Aspartate--ammonia ligase of Enterobacter sp. (strain 638).